Here is a 130-residue protein sequence, read N- to C-terminus: MAEQQYYGTGRRKTSSARVFLRPGSGDIKVNGRSLDEYFGRETARMIVRQPLELVDATEQFDVQVTVAGGGPSGQAGAIRHGITRALVQYDEALKQPLSKAGYVTRDARMVERKKIGLHKARRATQFSKR.

Belongs to the universal ribosomal protein uS9 family.

The polypeptide is Small ribosomal subunit protein uS9 (Alkalilimnicola ehrlichii (strain ATCC BAA-1101 / DSM 17681 / MLHE-1)).